The following is a 207-amino-acid chain: dTTP/UTP pyrophosphatase (207 aa).

Asp-79 serves as the catalytic Proton acceptor.

Belongs to the Maf family. YhdE subfamily. The cofactor is a divalent metal cation.

The protein localises to the cytoplasm. The catalysed reaction is dTTP + H2O = dTMP + diphosphate + H(+). It catalyses the reaction UTP + H2O = UMP + diphosphate + H(+). Functionally, nucleoside triphosphate pyrophosphatase that hydrolyzes dTTP and UTP. May have a dual role in cell division arrest and in preventing the incorporation of modified nucleotides into cellular nucleic acids. In Nitrobacter hamburgensis (strain DSM 10229 / NCIMB 13809 / X14), this protein is dTTP/UTP pyrophosphatase.